Consider the following 213-residue polypeptide: MQPRRIARELALLSLSQLPAKAEPPSDQMLSELLLAATRTLAAEARDHLEAASAELKQSSDRLLLSTLGSADLESSRAMLQEVIEMAQAAINRTGNALDLPEWVQLTDREEVRKFGGRLVLQVSNNRERIDRTLNDVMVDWQLHRVPRLDQDILRLAAAEILFLGTPEQVAINEAVELANRYSDEEGRRFINGVLRRLSTMLGKAARAARPSS.

This sequence belongs to the NusB family.

In terms of biological role, involved in transcription antitermination. Required for transcription of ribosomal RNA (rRNA) genes. Binds specifically to the boxA antiterminator sequence of the ribosomal RNA (rrn) operons. The protein is Transcription antitermination protein NusB of Synechococcus elongatus (strain ATCC 33912 / PCC 7942 / FACHB-805) (Anacystis nidulans R2).